The chain runs to 434 residues: T-box transcription factor T homolog (434 aa).

The T-box DNA-binding region spans 50–220 (LWKKFHKLTN…YNPFAKAFLD (171 aa)). Composition is skewed to polar residues over residues 355-364 (SGFSHVSSPQ) and 376-385 (HPTSSHQHNL). The interval 355-385 (SGFSHVSSPQSPLPTGLFRNPHPTSSHQHNL) is disordered.

In the developing embryo, expressed in the mesenchyme founder cells, vegetal plate of the mesenchyme blastula, extending tip of the invaginating archenteron and, later, in the secondary mesenchyme cells.

The protein resides in the nucleus. In terms of biological role, involved in the transcriptional regulation of genes required for mesoderm differentiation. This chain is T-box transcription factor T homolog, found in Hemicentrotus pulcherrimus (Sea urchin).